The sequence spans 258 residues: UPF0758 protein Bcep1808_2579 (258 aa).

An MPN domain is found at Pro-136 to Leu-258. 3 residues coordinate Zn(2+): His-207, His-209, and Asp-220. The JAMM motif signature appears at His-207–Asp-220.

Belongs to the UPF0758 family.

This is UPF0758 protein Bcep1808_2579 from Burkholderia vietnamiensis (strain G4 / LMG 22486) (Burkholderia cepacia (strain R1808)).